Here is a 96-residue protein sequence, read N- to C-terminus: Nucleoid-associated protein CT_335 (96 aa).

This sequence belongs to the YbaB/EbfC family. In terms of assembly, homodimer.

Its subcellular location is the cytoplasm. It is found in the nucleoid. Binds to DNA and alters its conformation. May be involved in regulation of gene expression, nucleoid organization and DNA protection. The sequence is that of Nucleoid-associated protein CT_335 from Chlamydia trachomatis serovar D (strain ATCC VR-885 / DSM 19411 / UW-3/Cx).